A 195-amino-acid chain; its full sequence is Segregation and condensation protein B (195 aa).

Belongs to the ScpB family. In terms of assembly, homodimer. Homodimerization may be required to stabilize the binding of ScpA to the Smc head domains. Component of a cohesin-like complex composed of ScpA, ScpB and the Smc homodimer, in which ScpA and ScpB bind to the head domain of Smc. The presence of the three proteins is required for the association of the complex with DNA.

It localises to the cytoplasm. In terms of biological role, participates in chromosomal partition during cell division. May act via the formation of a condensin-like complex containing Smc and ScpA that pull DNA away from mid-cell into both cell halves. This chain is Segregation and condensation protein B, found in Clostridium perfringens (strain ATCC 13124 / DSM 756 / JCM 1290 / NCIMB 6125 / NCTC 8237 / Type A).